The chain runs to 729 residues: Phenylalanine ammonia-lyase (729 aa).

Catalysis depends on Tyr-77, which acts as the Proton donor/acceptor. Residues 182 to 184 constitute a cross-link (5-imidazolinone (Ala-Gly)); sequence ASG. Ser-183 is subject to 2,3-didehydroalanine (Ser). 7 residues coordinate (E)-cinnamate: Asn-241, Gln-336, Arg-342, Asn-372, Lys-443, Glu-471, and Asn-474.

It belongs to the PAL/histidase family. Post-translationally, contains an active site 4-methylidene-imidazol-5-one (MIO), which is formed autocatalytically by cyclization and dehydration of residues Ala-Ser-Gly.

The protein localises to the cytoplasm. It carries out the reaction L-phenylalanine = (E)-cinnamate + NH4(+). The protein operates within secondary metabolite biosynthesis. It participates in phenylpropanoid metabolism; trans-cinnamate biosynthesis; trans-cinnamate from L-phenylalanine: step 1/1. In terms of biological role, phenylalanine ammonia-lyase; part of the gene cluster that mediates the biosynthesis of squalestatin S1 (SQS1, also known as zaragozic acid A), a heavily oxidized fungal polyketide that offers potent cholesterol lowering activity by targeting squalene synthase (SS). SQS1 is composed of a 2,8-dioxobicyclic[3.2.1]octane-3,4,5-tricarboxyclic acid core that is connected to two lipophilic polyketide arms. These initial steps feature the priming of an unusual benzoic acid starter unit onto the highly reducing polyketide synthase pks2, followed by oxaloacetate extension and product release to generate a tricarboxylic acid containing product. The phenylalanine ammonia lyase (PAL) M7 and the acyl-CoA ligase M9 are involved in transforming phenylalanine into benzoyl-CoA. The citrate synthase-like protein R3 is involved in connecting the C-alpha-carbons of the hexaketide chain and oxaloacetate to afford the tricarboxylic acid unit. The potential hydrolytic enzymes, M8 and M10, are in close proximity to pks2 and may participate in product release. On the other side, the tetraketide arm is synthesized by a the squalestatin tetraketide synthase pks1 and enzymatically esterified to the core in the last biosynthetic step, by the acetyltransferase M4. The biosynthesis of the tetraketide must involve 3 rounds of chain extension. After the first and second rounds methyl-transfer occurs, and in all rounds of extension the ketoreductase and dehydratase are active. The enoyl reductase and C-MeT of pks1 are not active in the final round of extension. The acetyltransferase M4 appears to have a broad substrate selectivity for its acyl CoA substrate, allowing the in vitro synthesis of novel squalestatins. The biosynthesis of SQS1 requires several oxidative steps likely performed by oxidoreductases M1, R1 and R2. Finally, in support of the identification of the cluster as being responsible for SQS1 production, the cluster contains a gene encoding a putative squalene synthase (SS) R6, suggesting a likely mechanism for self-resistance. The protein is Phenylalanine ammonia-lyase of Phoma sp. (strain ATCC 20986 / MF5453).